We begin with the raw amino-acid sequence, 271 residues long: Vacuolar arginine/histidine antiporter stm1 (271 aa).

In terms of domain architecture, PQ-loop 1 spans 14-80; it reads LTELSSFLGA…GNVSSTVLVL (67 aa). 3 consecutive transmembrane segments (helical) span residues 17–37, 49–69, and 77–97; these read LSSFLGALSLGCWVVLLIPQL, ISDLFLIIWLIGDFFNVLGSI, and VLVLSFYYIVSDSTLLMQIYY. S119 is modified (phosphoserine). The next 4 membrane-spanning stretches (helical) occupy residues 144–164, 178–198, 211–231, and 245–265; these read FGVMGCVVIVSTIVGNLIISS, PFTAGCISSVLYFCARIPQII, IIFFVLASVGNTSYAFSILVF, and PWILGAFSTIFLDIYIFYQFI. Residues 185–239 form the PQ-loop 2 domain; sequence SSVLYFCARIPQIIKNHKAKSTEGLSIIFFVLASVGNTSYAFSILVFPASDYLNY.

This sequence belongs to the laat-1 family.

The protein localises to the vacuole membrane. The enzyme catalyses L-histidine(out) + L-arginine(in) = L-histidine(in) + L-arginine(out). In terms of biological role, amino acid transporter that moves basic amino acids across the vacuolar membrane. Appears to function as an arginine/histidine antiporter. The protein is Vacuolar arginine/histidine antiporter stm1 (stm1) of Schizosaccharomyces pombe (strain 972 / ATCC 24843) (Fission yeast).